Reading from the N-terminus, the 507-residue chain is Maturase K (507 aa).

Belongs to the intron maturase 2 family. MatK subfamily.

It is found in the plastid. The protein resides in the chloroplast. In terms of biological role, usually encoded in the trnK tRNA gene intron. Probably assists in splicing its own and other chloroplast group II introns. The chain is Maturase K from Ranunculus macranthus (Large buttercup).